We begin with the raw amino-acid sequence, 296 residues long: 4-hydroxy-tetrahydrodipicolinate synthase (296 aa).

A pyruvate-binding site is contributed by T44. Y132 functions as the Proton donor/acceptor in the catalytic mechanism. Residue K162 is the Schiff-base intermediate with substrate of the active site. A pyruvate-binding site is contributed by I204.

Belongs to the DapA family. Homotetramer; dimer of dimers.

Its subcellular location is the cytoplasm. It carries out the reaction L-aspartate 4-semialdehyde + pyruvate = (2S,4S)-4-hydroxy-2,3,4,5-tetrahydrodipicolinate + H2O + H(+). The protein operates within amino-acid biosynthesis; L-lysine biosynthesis via DAP pathway; (S)-tetrahydrodipicolinate from L-aspartate: step 3/4. Its function is as follows. Catalyzes the condensation of (S)-aspartate-beta-semialdehyde [(S)-ASA] and pyruvate to 4-hydroxy-tetrahydrodipicolinate (HTPA). This Novosphingobium aromaticivorans (strain ATCC 700278 / DSM 12444 / CCUG 56034 / CIP 105152 / NBRC 16084 / F199) protein is 4-hydroxy-tetrahydrodipicolinate synthase.